Consider the following 560-residue polypeptide: Membrane protein insertase YidC (560 aa).

The next 6 membrane-spanning stretches (helical) occupy residues 5–25, 334–354, 357–377, 431–451, 476–496, and 522–542; these read IINLIAAIILSLSIIFGWQYF, AIDFGWFYIITKPVFYAMNFF, YVGNFGVSILIVTVIIKLLMF, LPILVQIPVFFSIYKVLYVTI, LFGLLPFAPPSFLMIGAWPIL, and FMPLIFLFMFSSFPVGLLIYW.

This sequence belongs to the OXA1/ALB3/YidC family. Type 1 subfamily. As to quaternary structure, interacts with the Sec translocase complex via SecD. Specifically interacts with transmembrane segments of nascent integral membrane proteins during membrane integration.

It is found in the cell inner membrane. Functionally, required for the insertion and/or proper folding and/or complex formation of integral membrane proteins into the membrane. Involved in integration of membrane proteins that insert both dependently and independently of the Sec translocase complex, as well as at least some lipoproteins. Aids folding of multispanning membrane proteins. In Rickettsia rickettsii (strain Sheila Smith), this protein is Membrane protein insertase YidC.